The following is a 523-amino-acid chain: Apoptosis inhibitor 5-B (523 aa).

Positions 1-360 (MPTVEELYRN…HQLGRKLPDF (360 aa)) are ARM-like and Heat-like helical repeats. The disordered stretch occupies residues 446-523 (VQKTDSGQKR…RGNRSRGRIY (78 aa)). Positions 454–475 (KRMSDETSSTSPPKKPVVGPKR) match the Nuclear localization signal motif. The span at 502 to 515 (GFQGGRGRGWGGRG) shows a compositional bias: gly residues.

It belongs to the API5 family. Monomer.

Its subcellular location is the nucleus. Its function is as follows. May be an antiapoptotic factor. The sequence is that of Apoptosis inhibitor 5-B (api5-b) from Xenopus laevis (African clawed frog).